The primary structure comprises 114 residues: Ig heavy chain V-A2 region BS-1 (114 aa).

Gln-1 bears the Pyrrolidone carboxylic acid mark. Residues 1 to 107 (QSVKESEGGL…YLGLMDVWGP (107 aa)) form the Ig-like domain.

The chain is Ig heavy chain V-A2 region BS-1 from Oryctolagus cuniculus (Rabbit).